The primary structure comprises 248 residues: 2,3-bisphosphoglycerate-dependent phosphoglycerate mutase (248 aa).

Substrate contacts are provided by residues 8 to 15 (RHGESIWN), 21 to 22 (TG), Arg60, 87 to 90 (EKHY), Lys98, 114 to 115 (RR), and 183 to 184 (GN). His9 serves as the catalytic Tele-phosphohistidine intermediate. Glu87 functions as the Proton donor/acceptor in the catalytic mechanism.

This sequence belongs to the phosphoglycerate mutase family. BPG-dependent PGAM subfamily.

The catalysed reaction is (2R)-2-phosphoglycerate = (2R)-3-phosphoglycerate. It participates in carbohydrate degradation; glycolysis; pyruvate from D-glyceraldehyde 3-phosphate: step 3/5. In terms of biological role, catalyzes the interconversion of 2-phosphoglycerate and 3-phosphoglycerate. The polypeptide is 2,3-bisphosphoglycerate-dependent phosphoglycerate mutase (Parabacteroides distasonis (strain ATCC 8503 / DSM 20701 / CIP 104284 / JCM 5825 / NCTC 11152)).